The following is a 98-amino-acid chain: Ubiquitin-related modifier 1 (98 aa).

Gly98 carries the post-translational modification 1-thioglycine. Residue Gly98 forms a Glycyl lysine isopeptide (Gly-Lys) (interchain with K-? in acceptor proteins) linkage.

It belongs to the URM1 family. Post-translationally, C-terminal thiocarboxylation occurs in 2 steps, it is first acyl-adenylated (-COAMP) via the hesA/moeB/thiF part of UBA4, then thiocarboxylated (-COSH) via the rhodanese domain of UBA4.

The protein resides in the cytoplasm. Its pathway is tRNA modification; 5-methoxycarbonylmethyl-2-thiouridine-tRNA biosynthesis. Acts as a sulfur carrier required for 2-thiolation of mcm(5)S(2)U at tRNA wobble positions of cytosolic tRNA(Lys), tRNA(Glu) and tRNA(Gln). Serves as sulfur donor in tRNA 2-thiolation reaction by being thiocarboxylated (-COSH) at its C-terminus by the MOCS3 homolog UBA4. The sulfur is then transferred to tRNA to form 2-thiolation of mcm(5)S(2)U. Prior mcm(5) tRNA modification by the elongator complex is required for 2-thiolation. Also acts as a ubiquitin-like protein (UBL) that is covalently conjugated via an isopeptide bond to lysine residues of target proteins such as AHP1. The thiocarboxylated form serves as substrate for conjugation and oxidative stress specifically induces the formation of UBL-protein conjugates. This Candida glabrata (strain ATCC 2001 / BCRC 20586 / JCM 3761 / NBRC 0622 / NRRL Y-65 / CBS 138) (Yeast) protein is Ubiquitin-related modifier 1.